The following is a 651-amino-acid chain: L-type lectin-domain containing receptor kinase IX.1 (651 aa).

A signal peptide spans 1–19 (MANSILLFSFVLVLPFVCS). A legume-lectin like region spans residues 20–251 (VQFNISRFGS…GNRLLSWEFS (232 aa)). Over 20–269 (VQFNISRFGS…KKSQNDKKGM (250 aa)) the chain is Extracellular. Residues Asn-23, Asn-125, Asn-129, Asn-162, Asn-169, Asn-174, Asn-195, and Asn-211 are each glycosylated (N-linked (GlcNAc...) asparagine). Residues 270–290 (IIGISVSGFVLLTFFITSLIV) traverse the membrane as a helical segment. At 291 to 651 (FLKRKQQKKK…VTFSSAQHGR (361 aa)) the chain is on the cytoplasmic side. Positions 335-616 (FADDRKLGEG…LNLEAPVPHL (282 aa)) constitute a Protein kinase domain. Residues 341–349 (LGEGGFGAV) and Lys-364 contribute to the ATP site. Asp-459 functions as the Proton acceptor in the catalytic mechanism. The interval 630-651 (SNTTSVSSGGATVTFSSAQHGR) is disordered.

It in the C-terminal section; belongs to the protein kinase superfamily. Ser/Thr protein kinase family. In the N-terminal section; belongs to the leguminous lectin family. As to quaternary structure, interacts with ABCG40.

Its subcellular location is the cell membrane. It catalyses the reaction L-seryl-[protein] + ATP = O-phospho-L-seryl-[protein] + ADP + H(+). It carries out the reaction L-threonyl-[protein] + ATP = O-phospho-L-threonyl-[protein] + ADP + H(+). Its function is as follows. Promotes hydrogen peroxide H(2)O(2) production and cell death. In terms of biological role, involved in resistance response to the pathogenic oomycetes Phytophthora infestans and Phytophthora capsici. The sequence is that of L-type lectin-domain containing receptor kinase IX.1 from Arabidopsis thaliana (Mouse-ear cress).